Consider the following 1234-residue polypeptide: Chromosome-associated kinesin KIF4B (1234 aa).

The region spanning 9–336 (PVRVALRCRP…LRYADRARKI (328 aa)) is the Kinesin motor domain. Residue 88–95 (GQTGSGKT) participates in ATP binding. A coiled-coil region spans residues 350-999 (ELNHLKQQVQ…IKQKLILLQV (650 aa)). Ser394 is modified (phosphoserine). Disordered stretches follow at residues 494-513 (EEAQ…AFTT) and 712-737 (KRLK…HGKE). Polar residues predominate over residues 498–513 (VETSPETSRSSDAFTT). The interval 663–1234 (QWKQKKDKEV…GCSPIEEEAH (572 aa)) is interaction with PRC1. Positions 713 to 737 (RLKDALQKQREVTDKRKETQSHGKE) are enriched in basic and acidic residues. A Nuclear localization signal motif is present at residues 793-798 (PKLRKC). Thr799 is modified (phosphothreonine). Residues Ser801, Ser951, Ser1001, Ser1013, Ser1017, and Ser1028 each carry the phosphoserine modification. Positions 1000–1234 (ASRQKHLPND…GCSPIEEEAH (235 aa)) are globular. 4 disordered regions span residues 1007 to 1030 (PNDT…PSRV), 1052 to 1076 (VNEH…KPTK), 1122 to 1143 (RQQG…GSFK), and 1183 to 1234 (TAPA…EEAH). Positions 1056–1071 (EDGDGDGDSDEGDDEE) are enriched in acidic residues. A CRD; required for [4Fe-4S] cluster binding and localization to the spindle midzone and midbody during anaphase and telophase region spans residues 1086–1144 (QGCSCKGWCGNKQCGCRKQKSDCGVDCSCDPTKCRNRQQGKDSLGTVEQTQDSEGSFKL). The residue at position 1128 (Ser1128) is a Phosphoserine. Thr1183 carries the post-translational modification Phosphothreonine. Ser1188 carries the post-translational modification Phosphoserine. Lys1196 participates in a covalent cross-link: Glycyl lysine isopeptide (Lys-Gly) (interchain with G-Cter in SUMO2). The residue at position 1227 (Ser1227) is a Phosphoserine.

Belongs to the TRAFAC class myosin-kinesin ATPase superfamily. Kinesin family. Chromokinesin subfamily. [2Fe-2S] cluster is required as a cofactor. [4Fe-4S] cluster serves as cofactor. As to expression, specifically expressed in testis.

The protein resides in the nucleus matrix. Its subcellular location is the cytoplasm. It localises to the cytoskeleton. Functionally, iron-sulfur (Fe-S) cluster binding motor protein that has a role in chromosome segregation during mitosis. Translocates PRC1 to the plus ends of interdigitating spindle microtubules during the metaphase to anaphase transition, an essential step for the formation of an organized central spindle midzone and midbody and for successful cytokinesis. May play a role in mitotic chromosomal positioning and bipolar spindle stabilization. This Homo sapiens (Human) protein is Chromosome-associated kinesin KIF4B (KIF4B).